The primary structure comprises 129 residues: Ribosome-binding factor A (129 aa).

This sequence belongs to the RbfA family. As to quaternary structure, monomer. Binds 30S ribosomal subunits, but not 50S ribosomal subunits or 70S ribosomes.

The protein resides in the cytoplasm. Its function is as follows. One of several proteins that assist in the late maturation steps of the functional core of the 30S ribosomal subunit. Associates with free 30S ribosomal subunits (but not with 30S subunits that are part of 70S ribosomes or polysomes). Required for efficient processing of 16S rRNA. May interact with the 5'-terminal helix region of 16S rRNA. The polypeptide is Ribosome-binding factor A (Azotobacter vinelandii (strain DJ / ATCC BAA-1303)).